The following is a 577-amino-acid chain: Aspartate--tRNA ligase (577 aa).

Residue glutamate 171 participates in L-aspartate binding. The tract at residues 195-198 is aspartate; the sequence is QLFK. Arginine 217 is a binding site for L-aspartate. Residues 217–219 and glutamine 226 each bind ATP; that span reads RDE. Histidine 437 is a binding site for L-aspartate. Glutamate 472 contributes to the ATP binding site. Residue arginine 479 coordinates L-aspartate. 524–527 is a binding site for ATP; it reads GFDR.

It belongs to the class-II aminoacyl-tRNA synthetase family. Type 1 subfamily. Homodimer.

The protein resides in the cytoplasm. The catalysed reaction is tRNA(Asp) + L-aspartate + ATP = L-aspartyl-tRNA(Asp) + AMP + diphosphate. Its function is as follows. Catalyzes the attachment of L-aspartate to tRNA(Asp) in a two-step reaction: L-aspartate is first activated by ATP to form Asp-AMP and then transferred to the acceptor end of tRNA(Asp). This is Aspartate--tRNA ligase from Deinococcus geothermalis (strain DSM 11300 / CIP 105573 / AG-3a).